We begin with the raw amino-acid sequence, 435 residues long: 3-phosphoshikimate 1-carboxyvinyltransferase (435 aa).

3-phosphoshikimate contacts are provided by lysine 21, serine 22, and arginine 26. Lysine 21 lines the phosphoenolpyruvate pocket. 2 residues coordinate phosphoenolpyruvate: glycine 99 and arginine 127. 3-phosphoshikimate contacts are provided by serine 173, glutamine 175, aspartate 323, and lysine 350. A phosphoenolpyruvate-binding site is contributed by glutamine 175. Aspartate 323 acts as the Proton acceptor in catalysis. Arginine 354 and arginine 396 together coordinate phosphoenolpyruvate.

Belongs to the EPSP synthase family. In terms of assembly, monomer.

The protein localises to the cytoplasm. It catalyses the reaction 3-phosphoshikimate + phosphoenolpyruvate = 5-O-(1-carboxyvinyl)-3-phosphoshikimate + phosphate. It participates in metabolic intermediate biosynthesis; chorismate biosynthesis; chorismate from D-erythrose 4-phosphate and phosphoenolpyruvate: step 6/7. In terms of biological role, catalyzes the transfer of the enolpyruvyl moiety of phosphoenolpyruvate (PEP) to the 5-hydroxyl of shikimate-3-phosphate (S3P) to produce enolpyruvyl shikimate-3-phosphate and inorganic phosphate. This is 3-phosphoshikimate 1-carboxyvinyltransferase from Akkermansia muciniphila (strain ATCC BAA-835 / DSM 22959 / JCM 33894 / BCRC 81048 / CCUG 64013 / CIP 107961 / Muc).